The sequence spans 313 residues: MMENYKHTTVLLDEAVNGLNIRPDGIYIDGTFGRGGHSRLILSRLGAEGRLLAIDRDPQAIAVAQTIDDPRFSIVHGPFSQLAEYVGERNLTGKIDGILLDLGVSSPQLDDAERGFSFMRDGPLDMRMDPTRGQSAAEWLQTAEEDDIAWVIKTFGEERFGKRIARAIVERNRIQPMTRTKELAEVIAAAMPVKDKHKHPATRTFQAVRIWVNSELEEIEQALKSSLSVLAPGGRLSIISFHSLEDRIVKRFMREQSRGPQVPAGIPMTEAQLKKLGGRELRALGKLMPGEEEVAENPRARSSVLRIAERTNA.

Residues Gly-35–His-37, Asp-55, Phe-79, Asp-101, and Gln-108 contribute to the S-adenosyl-L-methionine site.

The protein belongs to the methyltransferase superfamily. RsmH family.

The protein localises to the cytoplasm. It catalyses the reaction cytidine(1402) in 16S rRNA + S-adenosyl-L-methionine = N(4)-methylcytidine(1402) in 16S rRNA + S-adenosyl-L-homocysteine + H(+). Its function is as follows. Specifically methylates the N4 position of cytidine in position 1402 (C1402) of 16S rRNA. The sequence is that of Ribosomal RNA small subunit methyltransferase H from Klebsiella pneumoniae subsp. pneumoniae (strain ATCC 700721 / MGH 78578).